Reading from the N-terminus, the 329-residue chain is Peroxidase 30 (329 aa).

Positions 1–27 (MKTMTQLNIAVVVVVTVLIGMLRSSEA) are cleaved as a signal peptide. 4 cysteine pairs are disulfide-bonded: cysteine 38-cysteine 116, cysteine 71-cysteine 76, cysteine 122-cysteine 324, and cysteine 201-cysteine 234. Histidine 69 serves as the catalytic Proton acceptor. Aspartate 70, valine 73, glycine 75, aspartate 77, and serine 79 together coordinate Ca(2+). 2 N-linked (GlcNAc...) asparagine glycosylation sites follow: asparagine 83 and asparagine 155. The interval 141–165 (SWSVPTGRRDGRISNKTEATNNIPP) is disordered. Over residues 156 to 165 (KTEATNNIPP) the composition is skewed to polar residues. Proline 164 contributes to the substrate binding site. Asparagine 169 is a glycosylation site (N-linked (GlcNAc...) asparagine). Histidine 194 provides a ligand contact to heme b. Threonine 195 lines the Ca(2+) pocket. N-linked (GlcNAc...) asparagine glycosylation is found at asparagine 210 and asparagine 240. 3 residues coordinate Ca(2+): aspartate 247, serine 250, and aspartate 255. N-linked (GlcNAc...) asparagine glycosylation occurs at asparagine 290.

It belongs to the peroxidase family. Classical plant (class III) peroxidase subfamily. Heme b serves as cofactor. The cofactor is Ca(2+). As to expression, mainly expressed in roots.

It is found in the secreted. It catalyses the reaction 2 a phenolic donor + H2O2 = 2 a phenolic radical donor + 2 H2O. Its function is as follows. Removal of H(2)O(2), oxidation of toxic reductants, biosynthesis and degradation of lignin, suberization, auxin catabolism, response to environmental stresses such as wounding, pathogen attack and oxidative stress. These functions might be dependent on each isozyme/isoform in each plant tissue. The sequence is that of Peroxidase 30 (PER30) from Arabidopsis thaliana (Mouse-ear cress).